The following is a 281-amino-acid chain: MNPRGNPSKMPTQIVLNRRPAAPARPQTTFTSLSQYHMYNTASTSSAPPPPPNQNFGQIREAIRTTQPTTVQLPPDCKLVEYTWQENGESRTVLIPMSNDSTEDDVRSALPQSVLESINQHQNQLRQGNAQAVHYYQKHQNPISHEKPIMVNPRQYKRIIKRREMRQKMEDSGRLPLERQKYMHESRRQHALKRRRTGGRFDANAEAAAASSEPSISSAAPSPPKAPRAPTTYAMIRPATSHPPVNIPKAPAMTYRPVQEEKKSIERISKAQMFTIPKRQQ.

Disordered stretches follow at residues 1 to 27 and 163 to 261; these read MNPR…ARPQ and REMR…VQEE. Positions 150-173 match the Subunit association domain (SAD) motif; it reads MVNPRQYKRIIKRREMRQKMEDSG. The segment covering 166 to 188 has biased composition (basic and acidic residues); that stretch reads RQKMEDSGRLPLERQKYMHESRR. A DNA-binding region (NFYA/HAP2-type) is located at residues 180-204; the sequence is QKYMHESRRQHALKRRRTGGRFDAN. The segment covering 189 to 198 has biased composition (basic residues); that stretch reads QHALKRRRTG. Residues 204–220 show a composition bias toward low complexity; sequence NAEAAAASSEPSISSAA.

It belongs to the NFYA/HAP2 subunit family. In terms of assembly, forms a heterotrimeric transcription factor complex (nfya-2-NF-Y complex) composed of nfya-2, nfyb-1 and nfyc-1. Interacts with the nfyb-1 and nfyc-1 dimer; the interaction is required for subsequent binding to the 5'-CCAAT-3' box motif in DNA. Does not interact with either nfyb-1 or nfyc-1 in their monomeric form. As to expression, highly expressed in certain parts of the gonads. Expressed in the spermatheca, intestine and in some neurons in the head. Not expressed in the intestine, the hypodermis, body wall muscle surrounding the pseudocoelomic space, secretory cells in the pharyngeal terminal bulb wall, in the small ganglia surrounding the pharynx and in the neurons running anteriorly to the sensory organs in the head.

The protein localises to the nucleus. Functionally, component of the sequence-specific heterotrimeric transcription factor (nfya-2-NF-Y) which specifically recognizes a 5'-CCAAT-3' box motif found in the promoters of its target genes to regulate their expression and control cellular identity in particular tissue types. In association with the components in the nfya-2-NF-Y complex, may repress the expression of the T-box transcription factor tbx-2 throughout larval development, which most likely restricts its expression to certain tissues. The sequence is that of Nuclear transcription factor Y subunit nfya-2 from Caenorhabditis elegans.